The chain runs to 196 residues: MINKIHGKVIEKKESSLVLMTTVFEFELLVSAFCLANFKLSDKVELFTYLYARENELKLFGFLNSDERETFKSLIGVSGIGPRAALRVLSNIRYNDFKEAIDREDVELVSKIKGIGKKMAGKMFLHLQGKLLINNELESSLFGFKELEESIVSMGFDRKIVNSKLKEACDLIEFSNLKDSEKEQFLFKEVLKRMSN.

Residues methionine 1–leucine 63 are domain I. The interval asparagine 64–serine 139 is domain II. Position 139 (serine 139) is a region of interest, flexible linker. Positions serine 139 to asparagine 196 are domain III.

This sequence belongs to the RuvA family. As to quaternary structure, homotetramer. Forms an RuvA(8)-RuvB(12)-Holliday junction (HJ) complex. HJ DNA is sandwiched between 2 RuvA tetramers; dsDNA enters through RuvA and exits via RuvB. An RuvB hexamer assembles on each DNA strand where it exits the tetramer. Each RuvB hexamer is contacted by two RuvA subunits (via domain III) on 2 adjacent RuvB subunits; this complex drives branch migration. In the full resolvosome a probable DNA-RuvA(4)-RuvB(12)-RuvC(2) complex forms which resolves the HJ.

The protein resides in the cytoplasm. Functionally, the RuvA-RuvB-RuvC complex processes Holliday junction (HJ) DNA during genetic recombination and DNA repair, while the RuvA-RuvB complex plays an important role in the rescue of blocked DNA replication forks via replication fork reversal (RFR). RuvA specifically binds to HJ cruciform DNA, conferring on it an open structure. The RuvB hexamer acts as an ATP-dependent pump, pulling dsDNA into and through the RuvAB complex. HJ branch migration allows RuvC to scan DNA until it finds its consensus sequence, where it cleaves and resolves the cruciform DNA. This chain is Holliday junction branch migration complex subunit RuvA, found in Borrelia garinii subsp. bavariensis (strain ATCC BAA-2496 / DSM 23469 / PBi) (Borreliella bavariensis).